The primary structure comprises 150 residues: Deoxyuridine 5'-triphosphate nucleotidohydrolase (150 aa).

Substrate contacts are provided by residues 69 to 71, asparagine 82, 86 to 88, and lysine 96; these read RSG and TID.

Belongs to the dUTPase family. Mg(2+) is required as a cofactor.

It carries out the reaction dUTP + H2O = dUMP + diphosphate + H(+). The protein operates within pyrimidine metabolism; dUMP biosynthesis; dUMP from dCTP (dUTP route): step 2/2. In terms of biological role, this enzyme is involved in nucleotide metabolism: it produces dUMP, the immediate precursor of thymidine nucleotides and it decreases the intracellular concentration of dUTP so that uracil cannot be incorporated into DNA. The sequence is that of Deoxyuridine 5'-triphosphate nucleotidohydrolase from Aquifex aeolicus (strain VF5).